The sequence spans 139 residues: ATP synthase epsilon chain (139 aa).

This sequence belongs to the ATPase epsilon chain family. As to quaternary structure, F-type ATPases have 2 components, CF(1) - the catalytic core - and CF(0) - the membrane proton channel. CF(1) has five subunits: alpha(3), beta(3), gamma(1), delta(1), epsilon(1). CF(0) has three main subunits: a, b and c.

Its subcellular location is the cell inner membrane. Functionally, produces ATP from ADP in the presence of a proton gradient across the membrane. This is ATP synthase epsilon chain from Pectobacterium carotovorum subsp. carotovorum (strain PC1).